Here is a 52-residue protein sequence, read N- to C-terminus: Troponin C, skeletal muscle (52 aa).

2 consecutive EF-hand domains span residues 2-37 (KSEE…SGEH) and 38-52 (VTDE…DGDK). The Ca(2+) site is built by D15, N17, D19, Y21, and E26.

Belongs to the troponin C family.

Troponin is the central regulatory protein of striated muscle contraction. Tn consists of three components: Tn-I which is the inhibitor of actomyosin ATPase, Tn-T which contains the binding site for tropomyosin and Tn-C. The binding of calcium to Tn-C abolishes the inhibitory action of Tn on actin filaments. The chain is Troponin C, skeletal muscle from Protopterus dolloi (Slender lungfish).